A 1361-amino-acid chain; its full sequence is Rho guanine nucleotide exchange factor 18 (1361 aa).

Disordered stretches follow at residues 33 to 88 (LQDL…SCSE), 131 to 156 (SGGG…SRSV), and 244 to 292 (DGAG…ARER). The span at 50 to 61 (PDSRPTGEEPGR) shows a compositional bias: basic and acidic residues. Over residues 64 to 73 (LFSSLAGSQD) the composition is skewed to polar residues. Basic and acidic residues predominate over residues 74–88 (LSRRRSWERSRSCSE). Basic and acidic residues-rich tracts occupy residues 245-256 (GAGKNEKSDKST) and 271-292 (RQKE…ARER). The C2H2-type; degenerate zinc finger occupies 310-334 (SSCPLCGKPFLSSASLKEHPRGTLL). Positions 348–368 (TVSQKGGPQPTPSPAGPGTQL) are disordered. The DH domain occupies 447–644 (KRQDVLYELM…KDIISQVDAK (198 aa)). The PH domain occupies 684 to 786 (QLHLEGMLCW…WMAHIQRAVE (103 aa)). 4 disordered regions span residues 893-980 (ANGQ…DPRL), 1143-1211 (LKKQ…RLAK), 1229-1264 (AAVQ…SSAS), and 1277-1361 (MGKD…VIFF). Residue Thr-912 is modified to Phosphothreonine. Ser-921 is modified (phosphoserine). Residues 1038 to 1148 (LEQERQRNFE…LLRRLKKQNT (111 aa)) are a coiled coil. The segment covering 1191 to 1211 (YAERPEVARRDSAPTENRLAK) has biased composition (basic and acidic residues). The segment covering 1254–1264 (RGSQRWESSAS) has biased composition (polar residues). A phosphoserine mark is found at Ser-1289 and Ser-1291. Pro residues-rich tracts occupy residues 1300-1317 (PAPP…PPAD) and 1334-1344 (PGPPAPSPLPA). Positions 1349 to 1361 (AKEDASKEDVIFF) are enriched in basic and acidic residues.

In terms of assembly, interacts with SEPT9; the interaction may inhibit GEF activity. Interacts with Gbetagamma subunits GNB1 and GNG2. Interacts with EPB41L4B. Interacts with PATJ (via C-terminus). As to expression, expressed in all tissues tested with highest expression in kidney and pancreas. Weakly or not expressed in liver, skeletal muscle and testis. Isoform 1: Expressed in eosinophils. Isoform 2: Expressed in eosinophils. Isoform 3: Expressed in eosinophils. Isoform 4: Not detected in eosinophils.

It is found in the cytoplasm. It localises to the cytoskeleton. The protein resides in the cell membrane. Its subcellular location is the apical cell membrane. Functionally, acts as a guanine nucleotide exchange factor (GEF) for RhoA GTPases. Its activation induces formation of actin stress fibers. Also acts as a GEF for RAC1, inducing production of reactive oxygen species (ROS). Does not act as a GEF for CDC42. The G protein beta-gamma (Gbetagamma) subunits of heterotrimeric G proteins act as activators, explaining the integrated effects of LPA and other G-protein coupled receptor agonists on actin stress fiber formation, cell shape change and ROS production. Required for EPB41L4B-mediated regulation of the circumferential actomyosin belt in epithelial cells. This Homo sapiens (Human) protein is Rho guanine nucleotide exchange factor 18 (ARHGEF18).